The sequence spans 236 residues: Glucosamine-6-phosphate deaminase (236 aa).

Catalysis depends on Asp62, which acts as the Proton acceptor; for enolization step. Catalysis depends on Asn128, which acts as the For ring-opening step. His130 acts as the Proton acceptor; for ring-opening step in catalysis. The For ring-opening step role is filled by Glu135.

Belongs to the glucosamine/galactosamine-6-phosphate isomerase family. NagB subfamily.

The enzyme catalyses alpha-D-glucosamine 6-phosphate + H2O = beta-D-fructose 6-phosphate + NH4(+). It participates in amino-sugar metabolism; N-acetylneuraminate degradation; D-fructose 6-phosphate from N-acetylneuraminate: step 5/5. In terms of biological role, catalyzes the reversible isomerization-deamination of glucosamine 6-phosphate (GlcN6P) to form fructose 6-phosphate (Fru6P) and ammonium ion. The chain is Glucosamine-6-phosphate deaminase from Oenococcus oeni (strain ATCC BAA-331 / PSU-1).